We begin with the raw amino-acid sequence, 472 residues long: Chitobiosyldiphosphodolichol beta-mannosyltransferase (472 aa).

Topologically, residues 1 to 20 (MEEFQFIKYKGFDHVFKYSG) are lumenal. Residues 21-41 (PWLWWLVGFYLCLPILAYTLL) traverse the membrane as a helical segment. Over 42 to 118 (PYLTMNGTIS…PITVTKNTSN (77 aa)) the chain is Cytoplasmic. Residues 119-139 (LPFILFAAKKMVVQFFQLLKL) constitute an intramembrane region (helical). At 140-472 (LSDFRGTDYV…MGKRFEYSTD (333 aa)) the chain is on the cytoplasmic side.

It belongs to the glycosyltransferase group 1 family.

The protein resides in the endoplasmic reticulum membrane. The catalysed reaction is an N,N'-diacetylchitobiosyl-diphospho-di-trans,poly-cis-dolichol + GDP-alpha-D-mannose = a beta-D-Man-(1-&gt;4)-beta-D-GlcNAc-(1-&gt;4)-alpha-D-GlcNAc-diphospho-di-trans,poly-cis-dolichol + GDP + H(+). The protein operates within protein modification; protein glycosylation. Its function is as follows. Participates in the formation of the lipid-linked precursor oligosaccharide for N-glycosylation. Involved in assembling the dolichol-pyrophosphate-GlcNAc(2)-Man(5) intermediate on the cytoplasmic surface of the ER. This chain is Chitobiosyldiphosphodolichol beta-mannosyltransferase (ALG1), found in Debaryomyces hansenii (strain ATCC 36239 / CBS 767 / BCRC 21394 / JCM 1990 / NBRC 0083 / IGC 2968) (Yeast).